Consider the following 910-residue polypeptide: Protein translocase subunit SecA (910 aa).

ATP contacts are provided by residues Gln87, 105-109, and Asp508; that span reads GEGKT. The span at 558 to 568 shows a compositional bias: basic and acidic residues; the sequence is RHESRRIDNQL. 2 disordered regions span residues 558 to 580 and 873 to 910; these read RHESRRIDNQLRGRSGRQGDPGS and AAQQGIAQVQRDEPKIGRNDPCPCGSGKKYKHCHGQLS. Cys894, Cys896, Cys905, and His906 together coordinate Zn(2+). The span at 900-910 shows a compositional bias: basic residues; that stretch reads KKYKHCHGQLS.

Belongs to the SecA family. Monomer and homodimer. Part of the essential Sec protein translocation apparatus which comprises SecA, SecYEG and auxiliary proteins SecDF-YajC and YidC. Requires Zn(2+) as cofactor.

The protein resides in the cell inner membrane. It is found in the cytoplasm. It catalyses the reaction ATP + H2O + cellular proteinSide 1 = ADP + phosphate + cellular proteinSide 2.. Part of the Sec protein translocase complex. Interacts with the SecYEG preprotein conducting channel. Has a central role in coupling the hydrolysis of ATP to the transfer of proteins into and across the cell membrane, serving both as a receptor for the preprotein-SecB complex and as an ATP-driven molecular motor driving the stepwise translocation of polypeptide chains across the membrane. The sequence is that of Protein translocase subunit SecA from Stenotrophomonas maltophilia (strain R551-3).